Reading from the N-terminus, the 950-residue chain is Translation initiation factor IF-2 (950 aa).

Basic and acidic residues-rich tracts occupy residues 128–156, 165–186, 200–234, and 291–312; these read KPKVAEPVKKSEPKAAAKAEETKVEKVEA, AEVKTENVADKKEPVVTEEKKK, KRAEDIKKEQAAARPEKKKFDKNRNDRNNRNDNRR, and NRRDRDRKKTDSNRDNTKDGNR. The disordered stretch occupies residues 128 to 352; sequence KPKVAEPVKK…YQNNQSSNVP (225 aa). Composition is skewed to polar residues over residues 322 to 336 and 343 to 352; these read NRNQVRNARNSNWNQ and YQNNQSSNVP. One can recognise a tr-type G domain in the interval 448–619; that stretch reads ERPAVVTIMG…LLVAEVQELK (172 aa). Residues 457–464 form a G1 region; it reads GHVDHGKT. 457–464 is a binding site for GTP; sequence GHVDHGKT. The segment at 482–486 is G2; it reads GITQH. The G3 stretch occupies residues 503-506; sequence DTPG. GTP contacts are provided by residues 503–507 and 557–560; these read DTPGH and NKLD. A G4 region spans residues 557–560; sequence NKLD. The interval 595 to 597 is G5; it reads SAK.

This sequence belongs to the TRAFAC class translation factor GTPase superfamily. Classic translation factor GTPase family. IF-2 subfamily.

Its subcellular location is the cytoplasm. Its function is as follows. One of the essential components for the initiation of protein synthesis. Protects formylmethionyl-tRNA from spontaneous hydrolysis and promotes its binding to the 30S ribosomal subunits. Also involved in the hydrolysis of GTP during the formation of the 70S ribosomal complex. The polypeptide is Translation initiation factor IF-2 (infB) (Lactococcus lactis subsp. cremoris (Streptococcus cremoris)).